The sequence spans 319 residues: GTPase Era (319 aa).

In terms of domain architecture, Era-type G spans 9–196 (RSGVSLIIGR…MRTLRDLLPE (188 aa)). Positions 17–24 (GRPSSGKS) are G1. 17–24 (GRPSSGKS) provides a ligand contact to GTP. The G2 stretch occupies residues 43–47 (QTTRN). Positions 64 to 67 (DTPG) are G3. GTP is bound by residues 64-68 (DTPGY) and 127-130 (NKVD). The tract at residues 127-130 (NKVD) is G4. The G5 stretch occupies residues 175–177 (ISA). The KH type-2 domain maps to 227 to 303 (CRDELPHALY…HISLDIRVKV (77 aa)).

The protein belongs to the TRAFAC class TrmE-Era-EngA-EngB-Septin-like GTPase superfamily. Era GTPase family. Monomer.

The protein resides in the cytoplasm. It localises to the cell inner membrane. Its function is as follows. An essential GTPase that binds both GDP and GTP, with rapid nucleotide exchange. Plays a role in 16S rRNA processing and 30S ribosomal subunit biogenesis and possibly also in cell cycle regulation and energy metabolism. This chain is GTPase Era, found in Treponema pallidum (strain Nichols).